The following is a 273-amino-acid chain: MNLLHALILGALQGVTEVLPISSSAHLILVPWLLGWPESGLTFDVALHLGTFLALVVYFRRDIVDMAVSTIDAVKHRSLDTPARRLPFLVIASAVPAALVGKLFETQIEELFRSRPLLIGLFLILFGVGLGLADLFGRKRRFMAQVTVSHALVIGLFQCLALIPGVSRSGITITAGLMLGFNRVGAARFSFLMSLPIVAGAALFKMLHLLDQGIPAGEGLPLAAGIVSSAVTGYISVAFLLRFVQKRSIAPFVWYRLIAGGAVVSVILTGISG.

The next 7 membrane-spanning stretches (helical) occupy residues 39–59, 86–106, 117–137, 146–166, 189–209, 220–240, and 249–269; these read SGLTFDVALHLGTFLALVVYF, LPFLVIASAVPAALVGKLFET, LLIGLFLILFGVGLGLADLFG, VTVSHALVIGLFQCLALIPGV, FSFLMSLPIVAGAALFKMLHL, LPLAAGIVSSAVTGYISVAFL, and IAPFVWYRLIAGGAVVSVILT.

Belongs to the UppP family.

The protein localises to the cell inner membrane. The catalysed reaction is di-trans,octa-cis-undecaprenyl diphosphate + H2O = di-trans,octa-cis-undecaprenyl phosphate + phosphate + H(+). Catalyzes the dephosphorylation of undecaprenyl diphosphate (UPP). Confers resistance to bacitracin. This chain is Undecaprenyl-diphosphatase, found in Pelobacter propionicus (strain DSM 2379 / NBRC 103807 / OttBd1).